Here is a 201-residue protein sequence, read N- to C-terminus: 3-isopropylmalate dehydratase small subunit (201 aa).

It belongs to the LeuD family. LeuD type 1 subfamily. As to quaternary structure, heterodimer of LeuC and LeuD.

It catalyses the reaction (2R,3S)-3-isopropylmalate = (2S)-2-isopropylmalate. It functions in the pathway amino-acid biosynthesis; L-leucine biosynthesis; L-leucine from 3-methyl-2-oxobutanoate: step 2/4. Catalyzes the isomerization between 2-isopropylmalate and 3-isopropylmalate, via the formation of 2-isopropylmaleate. The sequence is that of 3-isopropylmalate dehydratase small subunit from Ruegeria sp. (strain TM1040) (Silicibacter sp.).